Here is a 49-residue protein sequence, read N- to C-terminus: uncharacterized protein (49 aa).

The interval 1 to 49 is disordered; it reads MSNETFEQNEPKPTKVEELQPGDVEAVEDSTPVREITQTDHINKAMLQI. A compositionally biased stretch (basic and acidic residues) spans 9-18; the sequence is NEPKPTKVEE.

This is an uncharacterized protein from Dictyostelium discoideum (Social amoeba).